Here is a 52-residue protein sequence, read N- to C-terminus: MKSKTSSFPFCLVMFKKLVLLNQLSRQLVKQLLQEWSIMKLWVTLLPEFTNF.

This is an uncharacterized protein from Saccharomyces cerevisiae (strain ATCC 204508 / S288c) (Baker's yeast).